A 609-amino-acid chain; its full sequence is NADH-ubiquinone oxidoreductase chain 5 (609 aa).

Transmembrane regions (helical) follow at residues 3–23 (VINLFASSIITTLSMLTLPIV), 41–61 (TAISYAFMISMIPTTMFIYSG), 90–110 (MIFVPVALFVTWSIMEFSMWY), 115–135 (PFINRFFKYLLMFLITMMILV), 140–160 (LFQLFIGWEGVGIMSFLLIGW), 174–194 (AVLYNRIGDVGFIMAMAWFLI), 214–236 (VPLMGLLLAATGKSAQFGLHPWL), 244–264 (TPVSALLHSSTMVVAGVFLLI), 276–296 (MQTTTLCLGAITTLFTAICAL), 304–323 (IIAFSTSSQLGLMIVTIGIN), 328–350 (AFLHICTHAFFKAMLFLCSGSII), 368–388 (VLPFTTTSLIVGSLALTGMPF), 410–432 (WALLLTLVATSMTAAYSTRIMFF), 460–480 (LLLGSIFAGYLISYNITPTST), 491–511 (LMALTVTLLGFILALELNLTS), and 585–605 (GLIKLYFLSFIITLILALMMI).

Belongs to the complex I subunit 5 family. As to quaternary structure, core subunit of respiratory chain NADH dehydrogenase (Complex I) which is composed of 45 different subunits.

It localises to the mitochondrion inner membrane. The catalysed reaction is a ubiquinone + NADH + 5 H(+)(in) = a ubiquinol + NAD(+) + 4 H(+)(out). Functionally, core subunit of the mitochondrial membrane respiratory chain NADH dehydrogenase (Complex I) which catalyzes electron transfer from NADH through the respiratory chain, using ubiquinone as an electron acceptor. Essential for the catalytic activity and assembly of complex I. The chain is NADH-ubiquinone oxidoreductase chain 5 (MT-ND5) from Halichoerus grypus (Gray seal).